Here is a 221-residue protein sequence, read N- to C-terminus: Large ribosomal subunit protein uL3 (221 aa).

Residues 140 to 160 (GGPKTHGSGFHRHAGSIGMRS) form a disordered region.

Belongs to the universal ribosomal protein uL3 family. As to quaternary structure, part of the 50S ribosomal subunit. Forms a cluster with proteins L14 and L19.

One of the primary rRNA binding proteins, it binds directly near the 3'-end of the 23S rRNA, where it nucleates assembly of the 50S subunit. This chain is Large ribosomal subunit protein uL3, found in Chlamydia caviae (strain ATCC VR-813 / DSM 19441 / 03DC25 / GPIC) (Chlamydophila caviae).